The sequence spans 131 residues: Glycine cleavage system H protein (131 aa).

One can recognise a Lipoyl-binding domain in the interval 24–106 (RVTVGISDHA…YGDGWMYVVE (83 aa)). Residue K65 is modified to N6-lipoyllysine.

Belongs to the GcvH family. The glycine cleavage system is composed of four proteins: P, T, L and H. The cofactor is (R)-lipoate.

The glycine cleavage system catalyzes the degradation of glycine. The H protein shuttles the methylamine group of glycine from the P protein to the T protein. The sequence is that of Glycine cleavage system H protein from Stenotrophomonas maltophilia (strain R551-3).